Consider the following 281-residue polypeptide: 2-dehydro-3-deoxyphosphooctonate aldolase (281 aa).

Belongs to the KdsA family.

The protein resides in the cytoplasm. The enzyme catalyses D-arabinose 5-phosphate + phosphoenolpyruvate + H2O = 3-deoxy-alpha-D-manno-2-octulosonate-8-phosphate + phosphate. The protein operates within carbohydrate biosynthesis; 3-deoxy-D-manno-octulosonate biosynthesis; 3-deoxy-D-manno-octulosonate from D-ribulose 5-phosphate: step 2/3. It functions in the pathway bacterial outer membrane biogenesis; lipopolysaccharide biosynthesis. The protein is 2-dehydro-3-deoxyphosphooctonate aldolase of Pseudomonas entomophila (strain L48).